The following is a 310-amino-acid chain: MVKVYAPASSANMSVGFDVLGAAVTPVDGALLGDVVTVEAAETFSLNNLGRFADKLPSEPRENIVYQCWERFCQELGKQIPVAMTLEKNMPIGSGLGSSACSVVAALMAMNEHCGKPLNDTRLLALMGELEGRISGSIHYDNVAPCFLGGMQLMIEENDIISQQVPGFDEWLWVLAYPGIKVSTAEARAILPAQYRRQDCIAHGRHLAGFIHACYSRQPELAAKLMKDVIAEPYRERLLPGFRQARQAVAEIGAVASGISGSGPTLFALCDKPETAQRVADWLGKNYLQNQEGFVHICRLDTAGARVLEN.

91 to 101 (PIGSGLGSSAC) is an ATP binding site.

This sequence belongs to the GHMP kinase family. Homoserine kinase subfamily.

It is found in the cytoplasm. The enzyme catalyses L-homoserine + ATP = O-phospho-L-homoserine + ADP + H(+). It functions in the pathway amino-acid biosynthesis; L-threonine biosynthesis; L-threonine from L-aspartate: step 4/5. Catalyzes the ATP-dependent phosphorylation of L-homoserine to L-homoserine phosphate. This Escherichia coli (strain K12 / MC4100 / BW2952) protein is Homoserine kinase.